We begin with the raw amino-acid sequence, 315 residues long: CRISPR-associated endonuclease Cas1 1 (315 aa).

Mn(2+) contacts are provided by Glu-144, His-208, and Glu-223.

The protein belongs to the CRISPR-associated endonuclease Cas1 family. As to quaternary structure, homodimer, forms a heterotetramer with a Cas2 homodimer. Requires Mg(2+) as cofactor. It depends on Mn(2+) as a cofactor.

Its function is as follows. CRISPR (clustered regularly interspaced short palindromic repeat), is an adaptive immune system that provides protection against mobile genetic elements (viruses, transposable elements and conjugative plasmids). CRISPR clusters contain spacers, sequences complementary to antecedent mobile elements, and target invading nucleic acids. CRISPR clusters are transcribed and processed into CRISPR RNA (crRNA). Acts as a dsDNA endonuclease. Involved in the integration of spacer DNA into the CRISPR cassette. This Thermus thermophilus (strain ATCC 27634 / DSM 579 / HB8) protein is CRISPR-associated endonuclease Cas1 1.